A 280-amino-acid chain; its full sequence is MTVVVVTDTSCRLPADLREQWSIRQVPLHILLDGLDLRDGVDEIPDDIHKRHATTAGATPVELSAAYQRALADSGGDGVVAVHISSALSGTFRAAELTAAELGPAVRVIDSRSAAMGVGFAALAAGRAAAAGDELDTVARAAAAAVSRIHAFVAVARLDNLRRSGRISGAKAWLGTALALKPLLSVDDGKLVLVQRVRTVSNATAVMIDRVCQLVGDRPAALAVHHVADPAAANDVAAALAERLPACEPAMVTAMGPVLALHVGAGAVGVCVDVGASPPA.

Residues 3–274 (VVVVTDTSCR…AGAVGVCVDV (272 aa)) enclose the DegV domain. A hexadecanoate-binding site is contributed by Ser-89.

In terms of biological role, may bind long-chain fatty acids, such as palmitate, and may play a role in lipid transport or fatty acid metabolism. The sequence is that of DegV domain-containing protein Mb2440c from Mycobacterium bovis (strain ATCC BAA-935 / AF2122/97).